The primary structure comprises 415 residues: Calreticulin (415 aa).

Residues 1–20 (MANPKSLSLFLLSLLAIASA) form the signal peptide. An N-linked (GlcNAc...) asparagine glycan is attached at Asn-52. Residues Cys-106 and Cys-138 are joined by a disulfide bond. Residues Tyr-110, Lys-112, Tyr-129, and Asp-136 each coordinate an alpha-D-glucoside. Asn-152 carries an N-linked (GlcNAc...) asparagine glycan. 7 consecutive repeat copies span residues 192–203 (KQTGSLYTDWDL), 211–222 (DPEAKKPEDWDE), 228–239 (DPEDKKPEGYDD), 246–257 (DPDAKKPEDWDD), 261–271 (GEWTAPTIANP), 275–285 (GPWKPKKIKNP), and 289–299 (GKWKAPMIDNP). The interval 192 to 257 (KQTGSLYTDW…DAKKPEDWDD (66 aa)) is 4 X approximate repeats. Positions 208–253 (KIKDPEAKKPEDWDEKEYIPDPEDKKPEGYDDIPKEIPDPDAKKPE) are enriched in basic and acidic residues. Positions 208–276 (KIKDPEAKKP…TIANPEYKGP (69 aa)) are disordered. The segment at 261–299 (GEWTAPTIANPEYKGPWKPKKIKNPNYKGKWKAPMIDNP) is 3 X approximate repeats. Glu-319 is an an alpha-D-glucoside binding site. Over residues 347 to 376 (ETWGKNKDAEKAAFEEAEKKKEEEESKDDP) the composition is skewed to basic and acidic residues. The interval 347–415 (ETWGKNKDAE…DSAEDVHDEL (69 aa)) is disordered. Composition is skewed to acidic residues over residues 377–397 (ADSD…EDDG) and 404–415 (AEDSAEDVHDEL). A Prevents secretion from ER motif is present at residues 412-415 (HDEL).

The protein belongs to the calreticulin family.

The protein localises to the endoplasmic reticulum lumen. Its function is as follows. Molecular calcium-binding chaperone promoting folding, oligomeric assembly and quality control in the ER via the calreticulin/calnexin cycle. This lectin may interact transiently with almost all of the monoglucosylated glycoproteins that are synthesized in the ER. The protein is Calreticulin of Ricinus communis (Castor bean).